A 294-amino-acid polypeptide reads, in one-letter code: Probable endonuclease 4 (294 aa).

Zn(2+) contacts are provided by H78, H118, E155, D189, H192, H226, D239, H241, and E271.

This sequence belongs to the AP endonuclease 2 family. Zn(2+) is required as a cofactor.

It carries out the reaction Endonucleolytic cleavage to 5'-phosphooligonucleotide end-products.. Its function is as follows. Endonuclease IV plays a role in DNA repair. It cleaves phosphodiester bonds at apurinic or apyrimidinic (AP) sites, generating a 3'-hydroxyl group and a 5'-terminal sugar phosphate. This Oleidesulfovibrio alaskensis (strain ATCC BAA-1058 / DSM 17464 / G20) (Desulfovibrio alaskensis) protein is Probable endonuclease 4.